A 311-amino-acid chain; its full sequence is Pyrimidine-specific ribonucleoside hydrolase RihA (311 aa).

The active site involves H240.

The protein belongs to the IUNH family. RihA subfamily.

In terms of biological role, hydrolyzes with equal efficiency cytidine or uridine to ribose and cytosine or uracil, respectively. This is Pyrimidine-specific ribonucleoside hydrolase RihA from Escherichia coli (strain K12 / MC4100 / BW2952).